The primary structure comprises 132 residues: Small ribosomal subunit protein uS8 (132 aa).

This sequence belongs to the universal ribosomal protein uS8 family. In terms of assembly, part of the 30S ribosomal subunit. Contacts proteins S5 and S12.

One of the primary rRNA binding proteins, it binds directly to 16S rRNA central domain where it helps coordinate assembly of the platform of the 30S subunit. The protein is Small ribosomal subunit protein uS8 of Bartonella bacilliformis (strain ATCC 35685 / KC583 / Herrer 020/F12,63).